The primary structure comprises 243 residues: UPF0502 protein H16_B1091 (243 aa).

The segment at 1-23 (MQSNHDSDASQAGDRPARPALRP) is disordered.

Belongs to the UPF0502 family.

The sequence is that of UPF0502 protein H16_B1091 from Cupriavidus necator (strain ATCC 17699 / DSM 428 / KCTC 22496 / NCIMB 10442 / H16 / Stanier 337) (Ralstonia eutropha).